The following is a 473-amino-acid chain: GDP-fucose protein O-fucosyltransferase 2 (473 aa).

The first 25 residues, 1–25 (MKNMIYNLISISLYSLIIILTDIYA), serve as a signal peptide directing secretion. Residues 59-63 (GEGFN), 283-285 (HLR), and 379-380 (RF) each bind GDP-beta-L-fucose. Glu60 (proton acceptor) is an active-site residue.

Belongs to the glycosyltransferase 68 family.

The protein localises to the endoplasmic reticulum. The catalysed reaction is L-seryl-[protein] + GDP-beta-L-fucose = 3-O-(alpha-L-fucosyl)-L-seryl-[protein] + GDP + H(+). It catalyses the reaction L-threonyl-[protein] + GDP-beta-L-fucose = 3-O-(alpha-L-fucosyl)-L-threonyl-[protein] + GDP + H(+). Its pathway is protein modification; protein glycosylation. Catalyzes the reaction that attaches fucose through an O-glycosidic linkage to a conserved serine or threonine residue in the consensus sequence C1-X-X-S/T-C2 of thrombospondin type I repeats (TSRs) where C1 and C2 are the first and second cysteines of the repeat, respectively. O-fucosylates sporozoite proteins CSP and TRAP. O-fucosylation regulates stability and intracellular trafficking of TRAP but not of CSP. Dispensable for parasite transmission to the mosquito vector and/or infection of the vertebrate host hepatocytes. The sequence is that of GDP-fucose protein O-fucosyltransferase 2 from Plasmodium berghei (strain Anka).